Reading from the N-terminus, the 508-residue chain is Maturase K (508 aa).

The protein belongs to the intron maturase 2 family. MatK subfamily.

It localises to the plastid. The protein resides in the chloroplast. Its function is as follows. Usually encoded in the trnK tRNA gene intron. Probably assists in splicing its own and other chloroplast group II introns. This Amburana cearensis (Cerejeira) protein is Maturase K.